A 364-amino-acid polypeptide reads, in one-letter code: Paraneoplastic antigen Ma2 (364 aa).

N-acetylalanine is present on Ala-2. Residues 335 to 351 (EEEEASFENESIEEPEE) show a composition bias toward acidic residues. Residues 335–364 (EEEEASFENESIEEPEERDGYGRWNHEGDD) are disordered. The span at 352–364 (RDGYGRWNHEGDD) shows a compositional bias: basic and acidic residues.

It belongs to the PNMA family. Brain-specific. In some cancer patients, specifically expressed by testicular tumor cells.

The protein localises to the nucleus. It localises to the nucleolus. The polypeptide is Paraneoplastic antigen Ma2 (PNMA2) (Homo sapiens (Human)).